The sequence spans 107 residues: Iron-sulfur cluster assembly protein CyaY (107 aa).

Belongs to the frataxin family.

Its function is as follows. Involved in iron-sulfur (Fe-S) cluster assembly. May act as a regulator of Fe-S biogenesis. In Yersinia pseudotuberculosis serotype O:1b (strain IP 31758), this protein is Iron-sulfur cluster assembly protein CyaY.